The primary structure comprises 523 residues: Monocarboxylate transporter 7 (523 aa).

Residues 1-21 (MTQNKLKLCSKANVYTEVPDG) lie on the Cytoplasmic side of the membrane. A helical transmembrane segment spans residues 22-42 (GWGWAVAVSFFFVEVFTYGII). Residues 43–62 (KTFGVFFNDLMDSFNESNSR) lie on the Extracellular side of the membrane. A helical transmembrane segment spans residues 63–83 (ISWIISICVFVLTFSAPLATV). At 84–91 (LSNRFGHR) the chain is on the cytoplasmic side. A helical transmembrane segment spans residues 92–112 (LVVMLGGLLVSTGMVAASFSQ). Over 113 to 118 (EVSHMY) the chain is Extracellular. A helical transmembrane segment spans residues 119 to 139 (VAIGIISGLGYCFSFLPTVTI). Residues 140–149 (LSQYFGKRRS) are Cytoplasmic-facing. The chain crosses the membrane as a helical span at residues 150–170 (IVTAVASTGECFAVFAFAPAI). Residues 171–184 (MALKERIGWRYSLL) are Extracellular-facing. The helical transmembrane segment at 185–205 (FVGLLQLNIVIFGALLRPIFI) threads the bilayer. Over 206 to 299 (RGPASPKIVI…KEKSFICYAL (94 aa)) the chain is Cytoplasmic. Ser-234, Ser-237, Ser-240, and Ser-247 each carry phosphoserine. Residues 300–320 (FGLFATLGFFAPSLYIIPLGI) traverse the membrane as a helical segment. At 321-330 (SLGIDQDRAA) the chain is on the extracellular side. A helical transmembrane segment spans residues 331–351 (FLLSTMAIAEVFGRIGAGFVL). At 352–358 (NREPIRK) the chain is on the cytoplasmic side. Residues 359–379 (IYIELICVILLTVSLFAFTFA) form a helical membrane-spanning segment. The Extracellular segment spans residues 380–381 (TE). The helical transmembrane segment at 382–402 (FWGLMSCSIFFGFMVGTIGGT) threads the bilayer. Residues 403–423 (HIPLLAEDDVVGIEKMSSAAG) are Cytoplasmic-facing. The helical transmembrane segment at 424–444 (VYIFIQSIAGLAGPPLAGLLV) threads the bilayer. The Extracellular segment spans residues 445 to 452 (DQSKIYSR). The helical transmembrane segment at 453–473 (AFYSCAAGMALAAVCLALVRP) threads the bilayer. Topologically, residues 474-523 (CKMGLCQHHHSGETKVVSHRGKTLQDIPEDFLEMDLAKNEHRVHVQMEPV) are cytoplasmic.

Belongs to the major facilitator superfamily. Monocarboxylate porter (TC 2.A.1.13) family. As to quaternary structure, forms functional complexes with BSG/CD147 or EMB/GP70 ancillary proteins.

The protein localises to the basolateral cell membrane. The catalysed reaction is taurine(out) = taurine(in). Its function is as follows. Monocarboxylate transporter selective for taurine. May associate with BSG/CD147 or EMB/GP70 ancillary proteins to mediate facilitative efflux or influx of taurine across the plasma membrane. The transport is pH- and sodium-independent. Rather low-affinity, is likely effective for taurine transport in tissues where taurine is present at high concentrations. This is Monocarboxylate transporter 7 from Homo sapiens (Human).